The following is a 592-amino-acid chain: BTB/POZ domain-containing protein At5g03250 (592 aa).

A BTB domain is found at Ser28–Ala98. One can recognise an NPH3 domain in the interval Asp217–Arg502. Phosphotyrosine is present on Tyr443.

The protein belongs to the NPH3 family.

It participates in protein modification; protein ubiquitination. In terms of biological role, may act as a substrate-specific adapter of an E3 ubiquitin-protein ligase complex (CUL3-RBX1-BTB) which mediates the ubiquitination and subsequent proteasomal degradation of target proteins. This chain is BTB/POZ domain-containing protein At5g03250, found in Arabidopsis thaliana (Mouse-ear cress).